A 321-amino-acid polypeptide reads, in one-letter code: Malate dehydrogenase (321 aa).

NAD(+)-binding positions include 10–15 (GAGQIG) and Asp-34. Residues Arg-83 and Arg-89 each coordinate substrate. NAD(+) contacts are provided by residues Asn-96 and 119 to 121 (VTN). Substrate is bound by residues Asn-121 and Arg-152. His-176 functions as the Proton acceptor in the catalytic mechanism.

This sequence belongs to the LDH/MDH superfamily. MDH type 3 family.

The enzyme catalyses (S)-malate + NAD(+) = oxaloacetate + NADH + H(+). Catalyzes the reversible oxidation of malate to oxaloacetate. The chain is Malate dehydrogenase from Azorhizobium caulinodans (strain ATCC 43989 / DSM 5975 / JCM 20966 / LMG 6465 / NBRC 14845 / NCIMB 13405 / ORS 571).